Here is a 154-residue protein sequence, read N- to C-terminus: MQAVQVKVLNPKITEDKAFSLPTRATDGSAGIDLRACIDEPLTIKAGTTHLIGTGLAIYIQDPNFAGMILPRSGLGHKHGIVLGNLVGLIDADYQGELMVSIWNRSLEDFVLNPAERMAQYVVVPVARPEFEVVTEFSDTSARGAGGFGHSGRQ.

Substrate contacts are provided by residues 72-74 (RSG), N85, 89-91 (LID), and M99.

The protein belongs to the dUTPase family. Mg(2+) is required as a cofactor.

The catalysed reaction is dUTP + H2O = dUMP + diphosphate + H(+). It participates in pyrimidine metabolism; dUMP biosynthesis; dUMP from dCTP (dUTP route): step 2/2. In terms of biological role, this enzyme is involved in nucleotide metabolism: it produces dUMP, the immediate precursor of thymidine nucleotides and it decreases the intracellular concentration of dUTP so that uracil cannot be incorporated into DNA. The protein is Deoxyuridine 5'-triphosphate nucleotidohydrolase of Psychrobacter arcticus (strain DSM 17307 / VKM B-2377 / 273-4).